Reading from the N-terminus, the 449-residue chain is Trigger factor (449 aa).

The PPIase FKBP-type domain maps to 173–258 (GDRVTVDFVG…LKKVEWPHLP (86 aa)).

Belongs to the FKBP-type PPIase family. Tig subfamily.

The protein resides in the cytoplasm. It catalyses the reaction [protein]-peptidylproline (omega=180) = [protein]-peptidylproline (omega=0). Involved in protein export. Acts as a chaperone by maintaining the newly synthesized protein in an open conformation. Functions as a peptidyl-prolyl cis-trans isomerase. The polypeptide is Trigger factor (Burkholderia mallei (strain NCTC 10229)).